The following is a 967-amino-acid chain: Siderophore exporter MmpL4 (967 aa).

11 helical membrane-spanning segments follow: residues 26–46, 210–230, 242–262, 303–323, 333–353, 384–404, 769–789, 793–813, 821–841, 875–895, and 913–934; these read AFAV…TVFV, VIFI…LLLI, VVAV…VSLL, AHVI…LSFA, IPCA…GPAV, WPLP…LALP, WDLL…MLII, FIAA…SFGL, ILAI…LLAV, VVTN…VSDL, and TLIV…WFWW. The interval 943-967 is disordered; the sequence is ARTPTVPSETQPAGRPLAMSSDRLG.

The protein belongs to the resistance-nodulation-cell division (RND) (TC 2.A.6) family. MmpL subfamily. Interacts with MmpS4.

It localises to the cell inner membrane. In terms of biological role, part of an export system, which is required for biosynthesis and secretion of siderophores. This is Siderophore exporter MmpL4 (mmpL4) from Mycobacterium tuberculosis (strain CDC 1551 / Oshkosh).